We begin with the raw amino-acid sequence, 379 residues long: Protein RecA (379 aa).

Low complexity predominate over residues 1-14 (MSNEIKSISSSNSS). A disordered region spans residues 1–24 (MSNEIKSISSSNSSCPPNEARSGE). 84–91 (GPESSGKT) provides a ligand contact to ATP.

Belongs to the RecA family.

It localises to the cytoplasm. Functionally, can catalyze the hydrolysis of ATP in the presence of single-stranded DNA, the ATP-dependent uptake of single-stranded DNA by duplex DNA, and the ATP-dependent hybridization of homologous single-stranded DNAs. It interacts with LexA causing its activation and leading to its autocatalytic cleavage. In Prochlorococcus marinus (strain SARG / CCMP1375 / SS120), this protein is Protein RecA.